The chain runs to 185 residues: RRM domain-containing protein ECU09_1470 (185 aa).

RRM domains are found at residues 8–87 (NQLA…YAKR) and 101–170 (KKVY…PAYE).

The polypeptide is RRM domain-containing protein ECU09_1470 (Encephalitozoon cuniculi (strain GB-M1) (Microsporidian parasite)).